The sequence spans 336 residues: MGKGPGLDPSWSLAGTPCFKSTRLGKTHLESTAGGAQTGARLDPVQIARHSMCSSSVRLDHGPLPVGVAAMQGETFGPGADSQRSASGAEYQQLTCARLSVRDICYKLHAAARISMESGAWDSEYFDKRATPGVGAVGGSKMPPPHAHGAVAPPPAMYNNPAMESNKDDNFFGAIVLSLRAAQIVFTVVGLGVMGSLKHTSHGDYYYYYYDFSFTQVDSYIGVLSLDVIVCLYAIVQLVLCFIQRSNQGKYLSSPTTVAAKLTFVFDQVLAYALVATAGAAAGSALEIRKGTSCSGTWTVICSKGEASVAMSFFAFAFLAATAAVYSVRLLRITGR.

Over 1–170 (MGKGPGLDPS…PAMESNKDDN (170 aa)) the chain is Cytoplasmic. The chain crosses the membrane as a helical span at residues 171–191 (FFGAIVLSLRAAQIVFTVVGL). The Extracellular portion of the chain corresponds to 192–222 (GVMGSLKHTSHGDYYYYYYDFSFTQVDSYIG). A helical transmembrane segment spans residues 223 to 243 (VLSLDVIVCLYAIVQLVLCFI). Residues 244–261 (QRSNQGKYLSSPTTVAAK) lie on the Cytoplasmic side of the membrane. A helical membrane pass occupies residues 262–282 (LTFVFDQVLAYALVATAGAAA). Residues 283-307 (GSALEIRKGTSCSGTWTVICSKGEA) are Extracellular-facing. Residues 308–328 (SVAMSFFAFAFLAATAAVYSV) form a helical membrane-spanning segment. The Cytoplasmic segment spans residues 329–336 (RLLRITGR).

This sequence belongs to the Casparian strip membrane proteins (CASP) family. Homodimer and heterodimers.

The protein localises to the cell membrane. The chain is CASP-like protein UU1 from Physcomitrium patens (Spreading-leaved earth moss).